The chain runs to 165 residues: Transcriptional regulator MraZ (165 aa).

SpoVT-AbrB domains lie at 5–51 (TYEG…GEEL) and 80–123 (SAEL…NPER).

It belongs to the MraZ family. As to quaternary structure, forms oligomers.

It is found in the cytoplasm. The protein localises to the nucleoid. The protein is Transcriptional regulator MraZ of Hyphomonas neptunium (strain ATCC 15444).